A 145-amino-acid polypeptide reads, in one-letter code: Ubiquitin-conjugating enzyme E2 variant 1C (145 aa).

One can recognise a UBC core domain in the interval 12 to 145; sequence PRNFRLLEEL…LVQPPEGTFF (134 aa).

The protein belongs to the ubiquitin-conjugating enzyme family. Heterodimer with UBC35 or UBC36. In terms of tissue distribution, expressed in roots, shoots, leaves, stems and flowers, but not in pollen.

In terms of biological role, has no ubiquitin ligase activity on its own. The heterodimer with UBC catalyzes the synthesis of non-canonical poly-ubiquitin chains that are linked through 'Lys-63'. This type of poly-ubiquitination does not lead to protein degradation by the proteasome. Mediates transcriptional activation of target genes. May play a role in the control of progress through the cell cycle and differentiation. May play a role in the error-free DNA repair pathway and contributes to the survival of cells after DNA damage. The protein is Ubiquitin-conjugating enzyme E2 variant 1C (UEV1C) of Arabidopsis thaliana (Mouse-ear cress).